Reading from the N-terminus, the 971-residue chain is U2 snRNP component HSH155 (971 aa).

2 disordered regions span residues 1 to 22 (MSHP…LGGQ) and 54 to 118 (TRTV…AVKE). Residues 8–22 (VNANNSDKSHQLGGQ) show a composition bias toward polar residues. Positions 54-75 (TRTVQNREDSYHKRRFDMKFEP) are enriched in basic and acidic residues. Residues 78–90 (DTQTVTSSENTQD) show a composition bias toward polar residues. HEAT repeat units lie at residues 199 to 237 (MIFN…DLTK), 273 to 310 (AGLK…ALGV), 350 to 387 (NHLT…NSYP), 513 to 550 (LGCS…LLGT), 596 to 633 (PFLA…VIKN), 680 to 717 (PPIN…LAPT), 722 to 759 (KEWM…AIGP), 792 to 829 (CGPY…YIGN), and 832 to 870 (KDYI…NCSG).

The protein belongs to the SF3B1 family. As to quaternary structure, belongs to the CWC complex (or CEF1-associated complex), a spliceosome sub-complex reminiscent of a late-stage spliceosome composed of the U2, U5 and U6 snRNAs and at least BUD13, BUD31, BRR2, CDC40, CEF1, CLF1, CUS1, CWC2, CWC15, CWC21, CWC22, CWC23, CWC24, CWC25, CWC27, ECM2, HSH155, IST3, ISY1, LEA1, MSL1, NTC20, PRP8, PRP9, PRP11, PRP19, PRP21, PRP22, PRP45, PRP46, SLU7, SMB1, SMD1, SMD2, SMD3, SMX2, SMX3, SNT309, SNU114, SPP2, SYF1, SYF2, RSE1 and YJU2. Interacts with RDS3.

Its subcellular location is the nucleus. In terms of biological role, contacts pre-mRNA on both sides of the branch site early in spliceosome assembly. The chain is U2 snRNP component HSH155 (HSH155) from Saccharomyces cerevisiae (strain ATCC 204508 / S288c) (Baker's yeast).